The sequence spans 371 residues: N-acetyldiaminopimelate deacetylase (371 aa).

Residue aspartate 68 is part of the active site. The active-site Proton acceptor is the glutamate 127.

Belongs to the peptidase M20A family. N-acetyldiaminopimelate deacetylase subfamily.

The enzyme catalyses N-acetyl-(2S,6S)-2,6-diaminopimelate + H2O = (2S,6S)-2,6-diaminopimelate + acetate. The protein operates within amino-acid biosynthesis; L-lysine biosynthesis via DAP pathway; LL-2,6-diaminopimelate from (S)-tetrahydrodipicolinate (acetylase route): step 3/3. Its function is as follows. Catalyzes the conversion of N-acetyl-diaminopimelate to diaminopimelate and acetate. The protein is N-acetyldiaminopimelate deacetylase of Listeria welshimeri serovar 6b (strain ATCC 35897 / DSM 20650 / CCUG 15529 / CIP 8149 / NCTC 11857 / SLCC 5334 / V8).